The chain runs to 385 residues: 8-amino-7-oxononanoate synthase (385 aa).

Position 23 (Arg-23) interacts with substrate. 110–111 contributes to the pyridoxal 5'-phosphate binding site; it reads GF. Residue His-135 coordinates substrate. Pyridoxal 5'-phosphate contacts are provided by Ser-180, His-208, and Thr-234. Lys-237 bears the N6-(pyridoxal phosphate)lysine mark. Thr-350 serves as a coordination point for substrate.

It belongs to the class-II pyridoxal-phosphate-dependent aminotransferase family. BioF subfamily. Homodimer. Requires pyridoxal 5'-phosphate as cofactor.

It carries out the reaction 6-carboxyhexanoyl-[ACP] + L-alanine + H(+) = (8S)-8-amino-7-oxononanoate + holo-[ACP] + CO2. The protein operates within cofactor biosynthesis; biotin biosynthesis. Its function is as follows. Catalyzes the decarboxylative condensation of pimeloyl-[acyl-carrier protein] and L-alanine to produce 8-amino-7-oxononanoate (AON), [acyl-carrier protein], and carbon dioxide. The protein is 8-amino-7-oxononanoate synthase of Vibrio vulnificus (strain YJ016).